The sequence spans 451 residues: Lipase member H (451 aa).

Residues 1-16 (MLRLCFFISFMCLVKS) form the signal peptide. N-linked (GlcNAc...) asparagine glycosylation is present at Asn66. The Nucleophile role is filled by Ser154. The active-site Charge relay system is the Asp178. Cys233 and Cys246 are oxidised to a cystine. The Charge relay system role is filled by His248. 3 disulfide bridges follow: Cys270–Cys281, Cys284–Cys292, and Cys427–Cys446.

Belongs to the AB hydrolase superfamily. Lipase family. Interacts with TTMP/C3orf52. Expressed in placenta and colon. Weakly expressed in small intestine.

Its subcellular location is the secreted. It localises to the cell membrane. It carries out the reaction 1-hexadecanoyl-2-(9Z-octadecenoyl)-sn-glycero-3-phosphate + H2O = 2-(9Z-octadecenoyl)-sn-glycero-3-phosphate + hexadecanoate + H(+). Its function is as follows. Hydrolyzes specifically phosphatidic acid (PA) to produce 2-acyl lysophosphatidic acid (LPA; a potent bioactive lipid mediator) and fatty acid. Does not hydrolyze other phospholipids, like phosphatidylserine (PS), phosphatidylcholine (PC) and phosphatidylethanolamine (PE) or triacylglycerol (TG). The chain is Lipase member H (Liph) from Mus musculus (Mouse).